A 180-amino-acid chain; its full sequence is Protein GrpE (180 aa).

It belongs to the GrpE family. In terms of assembly, homodimer.

Its subcellular location is the cytoplasm. Participates actively in the response to hyperosmotic and heat shock by preventing the aggregation of stress-denatured proteins, in association with DnaK and GrpE. It is the nucleotide exchange factor for DnaK and may function as a thermosensor. Unfolded proteins bind initially to DnaJ; upon interaction with the DnaJ-bound protein, DnaK hydrolyzes its bound ATP, resulting in the formation of a stable complex. GrpE releases ADP from DnaK; ATP binding to DnaK triggers the release of the substrate protein, thus completing the reaction cycle. Several rounds of ATP-dependent interactions between DnaJ, DnaK and GrpE are required for fully efficient folding. This chain is Protein GrpE, found in Picrophilus torridus (strain ATCC 700027 / DSM 9790 / JCM 10055 / NBRC 100828 / KAW 2/3).